Consider the following 341-residue polypeptide: MKFVDEALIKVEAGKGGNGCLSFRREKFIPRGGPDGGDGGDGGSIYFEASSDLNTLIDFRYTRQYKAENGQSGMGGNCTGKKGDDLTIKVPVGTMVYDADTGELLADISQPGIPVLIAQGGFHGLGNTRYKSSVNRSPRQTTPGSPGESRNLRLELRVLADVGLLGLPNAGKSTLIRAVSSSKAKVADYPFTTLHPGLGVVRVSPYKSFVMADIPGLIEGAAQGAGLGHRFLKHLSRTCVLLHVIDIAPLDGSDPVADAKAILNELTQYNPDLLNKPRWLVLNKIDMLPDEKEREEKIQSIIKGLEWKDKVFSISAIESKGTQELCYALMQLIDEMKESEA.

The Obg domain maps to 1 to 159 (MKFVDEALIK…RNLRLELRVL (159 aa)). Positions 128–150 (TRYKSSVNRSPRQTTPGSPGESR) are disordered. Residues 129-144 (RYKSSVNRSPRQTTPG) show a composition bias toward polar residues. In terms of domain architecture, OBG-type G spans 160–334 (ADVGLLGLPN…LCYALMQLID (175 aa)). GTP-binding positions include 166 to 173 (GLPNAGKS), 191 to 195 (FTTLH), 213 to 216 (DIPG), 283 to 286 (NKID), and 315 to 317 (SAI). The Mg(2+) site is built by Ser173 and Thr193.

This sequence belongs to the TRAFAC class OBG-HflX-like GTPase superfamily. OBG GTPase family. As to quaternary structure, monomer. Mg(2+) serves as cofactor.

The protein resides in the cytoplasm. In terms of biological role, an essential GTPase which binds GTP, GDP and possibly (p)ppGpp with moderate affinity, with high nucleotide exchange rates and a fairly low GTP hydrolysis rate. Plays a role in control of the cell cycle, stress response, ribosome biogenesis and in those bacteria that undergo differentiation, in morphogenesis control. The chain is GTPase Obg from Legionella pneumophila subsp. pneumophila (strain Philadelphia 1 / ATCC 33152 / DSM 7513).